The following is a 270-amino-acid chain: L-cystine-binding protein TcyK (270 aa).

An N-terminal signal peptide occupies residues M1–A20. C21 is lipidated: N-palmitoyl cysteine. The S-diacylglycerol cysteine moiety is linked to residue C21.

The protein belongs to the bacterial solute-binding protein 3 family. As to quaternary structure, the complex is composed of two ATP-binding proteins (TcyN), two transmembrane proteins (TcyL and TcyM) and two solute-binding proteins (TcyJ and TcyK).

The protein localises to the cell membrane. Part of the ABC transporter complex TcyJKLMN involved in L-cystine import. Is also involved in cystathionine, djenkolate, and S-methylcysteine transport. The chain is L-cystine-binding protein TcyK (tcyK) from Bacillus subtilis (strain 168).